The following is a 176-amino-acid chain: Shikimate kinase (176 aa).

Position 12–17 (12–17) interacts with ATP; sequence GSGKST. Ser-16 contacts Mg(2+). Substrate-binding residues include Asp-34, Arg-58, and Gly-80. Arg-117 is an ATP binding site. Arg-136 is a substrate binding site. An ATP-binding site is contributed by Arg-153.

Belongs to the shikimate kinase family. Monomer. The cofactor is Mg(2+).

The protein localises to the cytoplasm. It carries out the reaction shikimate + ATP = 3-phosphoshikimate + ADP + H(+). It participates in metabolic intermediate biosynthesis; chorismate biosynthesis; chorismate from D-erythrose 4-phosphate and phosphoenolpyruvate: step 5/7. In terms of biological role, catalyzes the specific phosphorylation of the 3-hydroxyl group of shikimic acid using ATP as a cosubstrate. This is Shikimate kinase from Mycobacterium bovis (strain ATCC BAA-935 / AF2122/97).